The following is a 274-amino-acid chain: Diaminopimelate epimerase (274 aa).

Substrate-binding residues include asparagine 11, glutamine 44, and asparagine 64. The active-site Proton donor is the cysteine 73. Residues 74–75, asparagine 157, asparagine 190, and 208–209 each bind substrate; these read GN and ER. The active-site Proton acceptor is cysteine 217. Residue 218 to 219 coordinates substrate; that stretch reads GT.

This sequence belongs to the diaminopimelate epimerase family. Homodimer.

It is found in the cytoplasm. The catalysed reaction is (2S,6S)-2,6-diaminopimelate = meso-2,6-diaminopimelate. It functions in the pathway amino-acid biosynthesis; L-lysine biosynthesis via DAP pathway; DL-2,6-diaminopimelate from LL-2,6-diaminopimelate: step 1/1. Its function is as follows. Catalyzes the stereoinversion of LL-2,6-diaminopimelate (L,L-DAP) to meso-diaminopimelate (meso-DAP), a precursor of L-lysine and an essential component of the bacterial peptidoglycan. The protein is Diaminopimelate epimerase of Blochmanniella pennsylvanica (strain BPEN).